Reading from the N-terminus, the 803-residue chain is Volume-regulated anion channel subunit LRRC8B (803 aa).

Over 1 to 25 the chain is Cytoplasmic; the sequence is MITLTELKCLADAQSSYHILKPWWD. A helical membrane pass occupies residues 26 to 46; that stretch reads VFWYYITLIMLLVAVLAGALQ. Topologically, residues 47-119 are extracellular; sequence LTQSRVLCCL…YEKQLHWFAK (73 aa). Cystine bridges form between Cys-55/Cys-304 and Cys-109/Cys-289. The N-linked (GlcNAc...) asparagine glycan is linked to Asn-78. A helical membrane pass occupies residues 120–140; sequence FFPYLVLLHTLIFAACSNFWL. The Cytoplasmic segment spans residues 141–261; that stretch reads HYPSTSSRLE…DIIYRVYLKQ (121 aa). Phosphoserine is present on residues Ser-186 and Ser-196. A helical transmembrane segment spans residues 262-282; the sequence is IIVKVILFVLIITYVPYFLSY. Residues 283–307 lie on the Extracellular side of the membrane; it reads ITLEIDCSIDVQAFTGYKRYQCVYS. Residues 308–328 form a helical membrane-spanning segment; it reads LAEIFKVLASFYVILVMLYGL. At 329–803 the chain is on the cytoplasmic side; that stretch reads TSSYSLWWML…ERLQTCLDKC (475 aa). 15 LRR repeats span residues 415–439, 440–462, 464–486, 488–509, 511–532, 539–559, 562–582, 586–607, 609–630, 634–655, 657–678, 680–701, 703–724, 726–747, and 749–771; these read VKNSQDKVELHLFMLNGLPDNVFEL, TEMEVLSLELIPEVKLPAAVAQL, NLRELHVYHSSLVVDHPALAFLE, NLRILRLKFTEMGKIPRWVFHL, NLKELYLSGCVLPEQLSSLHLE, NLRTLYLKSSLSRIPQVVTDL, SLQKLSLDNEGSKLVVLNNLK, NLKSLELLSCDLERIPHSIFSL, NLHELDLKENNLKTVEEIISFQ, SLSCLKLWHNNIAYIPAQIGAL, NLEQLFLGHNNIESLPLQLFLC, KLHYLDLSYNHLTFIPEEIQYL, NLQYFAVTNNNIEMLPDGLFQC, KLQCLLLGRNSLTDLSPLVGEL, and NLTHLELTGNYLETLPVELEGCQ.

The protein belongs to the LRRC8 family. In terms of assembly, heterohexamer; oligomerizes with other LRRC8 proteins (LRRC8A, LRRC8C, LRRC8D and/or LRRC8E) to form a heterohexamer. In vivo, the subunit composition may depend primarily on expression levels, and heterooligomeric channels containing various proportions of the different LRRC8 proteins may coexist.

Its subcellular location is the cell membrane. The protein resides in the endoplasmic reticulum membrane. The catalysed reaction is chloride(in) = chloride(out). It carries out the reaction iodide(out) = iodide(in). The enzyme catalyses taurine(out) = taurine(in). Its function is as follows. Non-essential component of the volume-regulated anion channel (VRAC, also named VSOAC channel), an anion channel required to maintain a constant cell volume in response to extracellular or intracellular osmotic changes. The VRAC channel conducts iodide better than chloride and can also conduct organic osmolytes like taurine. Channel activity requires LRRC8A plus at least one other family member (LRRC8B, LRRC8C, LRRC8D or LRRC8E); channel characteristics depend on the precise subunit composition. This is Volume-regulated anion channel subunit LRRC8B from Mus musculus (Mouse).